A 420-amino-acid polypeptide reads, in one-letter code: Reticulon-4 receptor-like 2 (420 aa).

The signal sequence occupies residues 1–30 (MLPGLRRLLQGPASACLLLTLLALPPVTPS). Disulfide bonds link Cys-31/Cys-37 and Cys-35/Cys-46. Positions 31–60 (CPMLCTCYSSPPTVSCQANNFSSVPLSLPP) constitute an LRRNT domain. The N-linked (GlcNAc...) asparagine glycan is linked to Asn-50. LRR repeat units follow at residues 61–82 (STQR…TFGP), 83–104 (NLLT…TFRH), 107–129 (ALEE…TFQG), 132–153 (RLQS…IFRG), 156–177 (SLQY…LFAD), 180–201 (NLSH…VFRG), 204–225 (SLDR…AFHG), and 228–249 (RLTI…ALAD). An N-linked (GlcNAc...) asparagine glycan is attached at Asn-93. N-linked (GlcNAc...) asparagine glycosylation is present at Asn-236. The region spanning 261–312 (NPWACDCRARPLWAWFQRARVSSSDVTCATPPERQGRDLRTLRDTDFQACPP) is the LRRCT domain. 2 disulfide bridges follow: Cys-265-Cys-288 and Cys-267-Cys-310. The disordered stretch occupies residues 286–390 (VTCATPPERQ…GEQTCPGAAC (105 aa)). A compositionally biased stretch (basic and acidic residues) spans 294–306 (RQGRDLRTLRDTD). The important for interaction with MAG stretch occupies residues 315 to 327 (PTRPGSRARGNSS). Positions 351-360 (LPAEDSRGRQ) are enriched in basic and acidic residues. Cys-390 is lipidated: GPI-anchor amidated cysteine. Positions 391–420 (QAPADSRGPVLSAGLRTPLLCLLLLAPHHL) are cleaved as a propeptide — removed in mature form.

It belongs to the Nogo receptor family. As to quaternary structure, interaction with MAG is controversial, and may be indirect. Interacts with MAG. Does not interact with OMG and RTN4. In terms of processing, undergoes zinc metalloproteinase-mediated ectodomain shedding in neuroblastoma cells; is released both as a full-length ectodomain and an N-terminal fragment containing the leucine-rich repeat (LRR) region of the protein. N-glycosylated. O-glycosylated. Contains terminal sialic acid groups on its glycan chains. In terms of tissue distribution, detected in adult brain, in neocortex, hippocampus, striatum and dorsal root ganglion neurons, and in retina (at protein level). In brain, detected in cerebral cortex and hippocampus. Weak or no expression detected in the cerebellum, thalamus or striatum.

Its subcellular location is the cell membrane. It is found in the cell projection. The protein resides in the dendrite. It localises to the perikaryon. The protein localises to the axon. Its subcellular location is the membrane raft. Cell surface receptor that plays a functionally redundant role in the inhibition of neurite outgrowth mediated by MAG. Plays a functionally redundant role in postnatal brain development. Contributes to normal axon migration across the brain midline and normal formation of the corpus callosum. Does not seem to play a significant role in regulating axon regeneration in the adult central nervous system. Protects motoneurons against apoptosis; protection against apoptosis is probably mediated by MAG. Like other family members, plays a role in restricting the number dendritic spines and the number of synapses that are formed during brain development. Signaling mediates activation of Rho and downstream reorganization of the actin cytoskeleton. This chain is Reticulon-4 receptor-like 2, found in Rattus norvegicus (Rat).